The sequence spans 311 residues: Putative mitochondrial transporter UCP3 (311 aa).

Residues Met-1 to Pro-10 are Mitochondrial intermembrane-facing. Residues Pro-11–Phe-32 form a helical membrane-spanning segment. Solcar repeat units lie at residues Pro-11–Phe-105, Ser-114–Lys-205, and Asp-214–Ala-299. At Pro-33 to Ser-76 the chain is on the mitochondrial matrix side. The helical transmembrane segment at Pro-77–Tyr-99 threads the bilayer. Topologically, residues Asp-100–Arg-119 are mitochondrial intermembrane. A helical transmembrane segment spans residues Ile-120–Pro-136. The Mitochondrial matrix segment spans residues Thr-137–Leu-182. Residues Pro-183–Tyr-199 traverse the membrane as a helical segment. Residues Asp-200 to Phe-216 lie on the Mitochondrial intermembrane side of the membrane. A helical transmembrane segment spans residues Pro-217–Pro-236. The Mitochondrial matrix portion of the chain corresponds to Val-237–Ala-270. Residues Phe-271–Tyr-293 traverse the membrane as a helical segment. Positions Ser-278–Leu-300 are purine nucleotide binding. Topologically, residues Glu-294 to Phe-311 are mitochondrial intermembrane.

This sequence belongs to the mitochondrial carrier (TC 2.A.29) family. Interacts with HAX1; the interaction is direct and calcium-dependent.

It localises to the mitochondrion inner membrane. Its function is as follows. Putative transmembrane transporter that plays a role in mitochondrial metabolism via an as yet unclear mechanism. Originally, this mitochondrial protein was thought to act as a proton transmembrane transporter from the mitochondrial intermembrane space into the matrix, causing proton leaks through the inner mitochondrial membrane, thereby uncoupling mitochondrial membrane potential generation from ATP synthesis. However, this function is controversial and uncoupling may not be the function, or at least not the main function, but rather a consequence of more conventional metabolite transporter activity. The polypeptide is Putative mitochondrial transporter UCP3 (Canis lupus familiaris (Dog)).